The primary structure comprises 177 residues: Peptide deformylase 2 (177 aa).

2 residues coordinate Fe cation: C99 and H141. Residue E142 is part of the active site. H145 is a Fe cation binding site.

The protein belongs to the polypeptide deformylase family. It depends on Fe(2+) as a cofactor.

The enzyme catalyses N-terminal N-formyl-L-methionyl-[peptide] + H2O = N-terminal L-methionyl-[peptide] + formate. In terms of biological role, removes the formyl group from the N-terminal Met of newly synthesized proteins. Requires at least a dipeptide for an efficient rate of reaction. N-terminal L-methionine is a prerequisite for activity but the enzyme has broad specificity at other positions. The protein is Peptide deformylase 2 of Ralstonia nicotianae (strain ATCC BAA-1114 / GMI1000) (Ralstonia solanacearum).